The following is a 302-amino-acid chain: Gap junction delta-2 protein (302 aa).

Over 1–19 the chain is Cytoplasmic; the sequence is MGEWTILERLLEAAVQQHS. The helical transmembrane segment at 20-42 threads the bilayer; sequence TMIGRILLTVVVIFRILVVAIVG. Residues 43–75 lie on the Extracellular side of the membrane; sequence ETVYDDEQTMFVCNTLQPGCNQACYDKAFPISH. Residues 76-98 traverse the membrane as a helical segment; that stretch reads IRYWVFQIIMVCTPSLCFITYSV. At 99 to 177 the chain is on the cytoplasmic side; the sequence is HQSSKQRERQ…KIRRQEGISR (79 aa). Residues 178–200 form a helical membrane-spanning segment; sequence FYIIQVVFRNALEIGFLMGQYFL. Residues 201–232 lie on the Extracellular side of the membrane; the sequence is YGFKVPSMYECNRYPCVKMVECYVSRPTEKTV. Residues 233-255 traverse the membrane as a helical segment; that stretch reads FLVFMFAVSGLCVILNLAELNHL. Over 256–302 the chain is Cytoplasmic; it reads GWRKIKTAVRGAQERRKSIYEIRNKDSPHRIGVPNFGRTQSSDSAYV.

The protein belongs to the connexin family. Delta-type subfamily. A connexon is composed of a hexamer of connexins. In terms of tissue distribution, retinal specific.

It localises to the cell membrane. The protein resides in the cell junction. The protein localises to the gap junction. Its function is as follows. One gap junction consists of a cluster of closely packed pairs of transmembrane channels, the connexons, through which materials of low MW diffuse from one cell to a neighboring cell. In Leucoraja erinaceus (Little skate), this protein is Gap junction delta-2 protein.